The primary structure comprises 218 residues: Trichothecene biosynthesis transcription regulator TRI6 (218 aa).

Positions 154–181 (SQSTNDPGDAGKKGFATRKDRARHEAKH) are disordered. The segment covering 162 to 176 (DAGKKGFATRKDRAR) has biased composition (basic and acidic residues). The C2H2-type zinc-finger motif lies at 185–215 (IRCQWRDNNGDQCTRTFSRMDNMRDHFRRIH).

It is found in the nucleus. Functionally, transcriptional activator of part of the trichothecene biosynthesis cluster that mediates the production of the antimicrobial trichothecene harzianum A (HA) that plays a role in Botrytis cinerea antagonistic activity and plant defense priming. Regulates expression of both trichothecene and mevalonate pathway genes. The chain is Trichothecene biosynthesis transcription regulator TRI6 from Trichoderma arundinaceum.